The chain runs to 1200 residues: Metabotropic glycine receptor (1200 aa).

The first 24 residues, 1–24, serve as a signal peptide directing secretion; the sequence is MGAMAYSLLFCLLLAHLGLGEVGA. The interval 25 to 62 is disordered; that stretch reads SLDPPGRPDSPRERTPRGKQHGQQLPRASAPDPSIPWS. Residues 25-417 are Extracellular-facing; that stretch reads SLDPPGRPDS…CFVQEDKYLR (393 aa). The tract at residues 85-281 is cache-like region; sequence YLYTGDFHQL…CENGSYKPGW (197 aa). Asn98 and Asn143 each carry an N-linked (GlcNAc...) asparagine glycan. Residues Cys99 and Cys272 are joined by a disulfide bond. Glycine contacts are provided by Ser172 and Arg173. Asn215 carries an N-linked (GlcNAc...) asparagine glycan. Positions 234 to 253 are disordered; sequence LHRRGSNQGPRGLGHSWRRR. Residue Glu271 coordinates glycine. N-linked (GlcNAc...) asparagine glycosylation occurs at Asn274. Residue Asp307 participates in glycine binding. Asn333 carries an N-linked (GlcNAc...) asparagine glycan. A helical membrane pass occupies residues 418-439; sequence LAIISFQALCMLLDFVSMLVVY. Residues 440 to 451 lie on the Cytoplasmic side of the membrane; sequence HFRKAKSIRASG. Residues 452–474 form a helical membrane-spanning segment; it reads LILLETILFGSLLLYFPVVILYF. Over 475–478 the chain is Extracellular; the sequence is EPST. A helical transmembrane segment spans residues 479–501; the sequence is FRCILLRWARLLGFATVYGTVTL. Residues Cys481 and Cys573 are joined by a disulfide bond. Residues 502–525 lie on the Cytoplasmic side of the membrane; that stretch reads KLHRVLKVFLSRTAQRIPYMTGGR. The helical transmembrane segment at 526–547 threads the bilayer; the sequence is VMRMLAVIVLVVFWFLVGWTSS. Over 548–576 the chain is Extracellular; that stretch reads MCQNLERDILLVGQGQTSDHLTFNMCLID. The chain crosses the membrane as a helical span at residues 577–597; sequence RWDYMTAVAEFLFLLWGIYLC. The Cytoplasmic portion of the chain corresponds to 598-611; the sequence is YAVRTVPSAFHEPR. The helical transmembrane segment at 612-633 threads the bilayer; that stretch reads YMAVAVHNELIITAIFHTIRFV. The Extracellular portion of the chain corresponds to 634–642; sequence LASRLQPDW. Residues 643 to 664 traverse the membrane as a helical segment; sequence MLMLYFAHAHLTVTVTIGLLLI. Residues 665–1200 are Cytoplasmic-facing; that stretch reads PKFSHSSNNP…SANKIPGPQK (536 aa). 3 positions are modified to phosphoserine: Ser694, Ser705, and Ser708. A disordered region spans residues 757-875; it reads RITEIPETVS…EAESTESVPL (119 aa). Basic and acidic residues-rich tracts occupy residues 769–781 and 819–828; these read CSKE…DHSA and STYDHVRDQT. Lys774 participates in a covalent cross-link: Glycyl lysine isopeptide (Lys-Gly) (interchain with G-Cter in ubiquitin). A compositionally biased stretch (low complexity) spans 845–856; that stretch reads ENSTLESLSSKK. Phosphoserine is present on residues Ser865 and Ser944. The disordered stretch occupies residues 947-988; sequence DNVETIPNSGHMEEPRKPQKSGIMKQQRVSLPTANPDVSSGI. The span at 973-988 shows a compositional bias: polar residues; it reads QRVSLPTANPDVSSGI. Residues 1000-1004 carry the VCPWE motif 1 motif; the sequence is VCPWE. Phosphoserine is present on Ser1059. Positions 1065 to 1069 match the VCPWE motif 2 motif; it reads VCPWE. Ser1074 bears the Phosphoserine mark. The tract at residues 1130–1160 is disordered; sequence QMGDQEKQTSSSVDIIPGSCNSSNNSHQPLT. The VCPWE motif 3 signature appears at 1165–1169; sequence VCPWE. The disordered stretch occupies residues 1177–1200; sequence NAERSVTLPASSALSANKIPGPQK. The segment covering 1178–1191 has biased composition (polar residues); the sequence is AERSVTLPASSALS.

This sequence belongs to the G-protein coupled receptor 3 family. Homodimer. Associates with the RGS7-GNB5 complex, promoting its localization to the cell membrane and regulating its GTPase activator activity. Interacts (via VCPWE motifs) with GNAO1. Interacts with GPC4. Interacts with EGFLAM. Highly expressed in brain. Expressed in several brain regions including the cerebral cortex, hippocampus, cerebellum and caudate putamen. Only expressed in neurons, and not in microglia, oligodendrocytes or astrocytes. Expressed in the visual center of the cerebral cortex. Also expressed in the eye, including photoreceptors, ganglion cells and trabecular meshwork.

It is found in the cell membrane. The protein localises to the postsynaptic cell membrane. Its subcellular location is the presynaptic cell membrane. The protein resides in the nucleus. Its function is as follows. Metabotropic receptor for glycine that controls synapse formation and function in the brain. Acts as an atypical G-protein coupled receptor that recruits and regulates the RGS7-GNB5 complex instead of activating G proteins. In absence of glycine ligand, promotes the GTPase activator activity of RGS7, increasing the GTPase activity of G protein alpha subunits, thereby driving them into their inactive GDP-bound form. Glycine-binding changes the conformation of the intracellular surface, inhibiting the GTPase activator activity of the RGS7-GNB5 complex, promoting G protein alpha subunits into their active GTP-bound form and regulating cAMP levels. Also able to bind taurine, a compound closely related to glycine, but with a two-fold lower affinity. Glycine receptor-dependent regulation of cAMP controls key ion channels, kinases and neurotrophic factors involved in neuronal excitability and synaptic transmission. Plays a pivotal role in regulating mood and cognition via its ability to regulate neuronal excitability in L2/L3 pyramidal neurons of the prefrontal cortex. Also involved in spatial learning by regulating hippocampal CA1 neuronal excitability. Acts as a synaptic organizer in the hippocampus, required for proper mossy fiber-CA3 neurocircuitry establishment, structure and function: induces presynaptic differentiation in contacting axons via its interaction with GPC4. In addition to glycine, may also act as a receptor for osteocalcin (Bglap or Bglap2) hormone: osteocalcin-binding initiates a signaling response that prevents neuronal apoptosis in the hippocampus and regulates the synthesis of neurotransmitters. The polypeptide is Metabotropic glycine receptor (Mus musculus (Mouse)).